The sequence spans 207 residues: MSGLLFVVSAASGTGKTSLVKALLERVTNLHVSVSHTTRGQRPGELDGVHYHFTTKENFLSQVEDNGFIEYAEVFGNYYGTSQATVKQQLAKGHDVLLEIDWQGAQQVRRIFPESKQIFILPPSQFDLRQRLSNRGTDAVDVIEHRLSCAVEDMQQYVNFDYIIINDDFNKALHDLESVITANRLMLAQQVQRHHKLIEQLITPNSE.

The Guanylate kinase-like domain occupies 3–181; the sequence is GLLFVVSAAS…ALHDLESVIT (179 aa). 10-17 is an ATP binding site; that stretch reads AASGTGKT.

It belongs to the guanylate kinase family.

The protein localises to the cytoplasm. It carries out the reaction GMP + ATP = GDP + ADP. Essential for recycling GMP and indirectly, cGMP. This Acinetobacter baylyi (strain ATCC 33305 / BD413 / ADP1) protein is Guanylate kinase.